The chain runs to 517 residues: ATP synthase subunit alpha 1 (517 aa).

ATP is bound at residue 176-183; sequence GDRQTGKT.

The protein belongs to the ATPase alpha/beta chains family. F-type ATPases have 2 components, CF(1) - the catalytic core - and CF(0) - the membrane proton channel. CF(1) has five subunits: alpha(3), beta(3), gamma(1), delta(1), epsilon(1). CF(0) has three main subunits: a(1), b(2) and c(9-12). The alpha and beta chains form an alternating ring which encloses part of the gamma chain. CF(1) is attached to CF(0) by a central stalk formed by the gamma and epsilon chains, while a peripheral stalk is formed by the delta and b chains.

Its subcellular location is the cell inner membrane. The enzyme catalyses ATP + H2O + 4 H(+)(in) = ADP + phosphate + 5 H(+)(out). Produces ATP from ADP in the presence of a proton gradient across the membrane. The alpha chain is a regulatory subunit. This Shewanella frigidimarina (strain NCIMB 400) protein is ATP synthase subunit alpha 1.